The primary structure comprises 436 residues: EPS I polysaccharide export inner membrane protein EpsE (436 aa).

12 helical membrane-spanning segments follow: residues 20–40 (VLGL…NILL), 49–69 (FGLF…LATG), 91–111 (LCAF…ALYL), 133–153 (AAIV…QYAM), 160–180 (ATIS…MGPI), 185–205 (LALT…LLVL), 234–254 (VLTT…LAAM), 261–281 (LALF…PATL), 307–327 (ALLF…LLAG), 341–361 (AASS…SVLL), 375–395 (FAMA…ALRL), and 396–416 (GFGA…LILF).

It to E.coli bicyclomycin resistance protein (BCR).

It localises to the cell inner membrane. Probably involved in polymerization and/or export of exopolysaccharide EPS I which functions as a virulence factor. May play a role in export of EPS I or its intermediates across the membranes. In Ralstonia solanacearum (Pseudomonas solanacearum), this protein is EPS I polysaccharide export inner membrane protein EpsE (epsE).